Reading from the N-terminus, the 208-residue chain is NADH-quinone oxidoreductase subunit I 2 (208 aa).

4Fe-4S ferredoxin-type domains lie at 79-109 and 119-148; these read ILVE…IEGK and SVFN…QTDI. 8 residues coordinate [4Fe-4S] cluster: Cys88, Cys91, Cys94, Cys98, Cys128, Cys131, Cys134, and Cys138.

The protein belongs to the complex I 23 kDa subunit family. As to quaternary structure, NDH-1 is composed of 14 different subunits. Subunits NuoA, H, J, K, L, M, N constitute the membrane sector of the complex. [4Fe-4S] cluster is required as a cofactor.

It localises to the cell inner membrane. It catalyses the reaction a quinone + NADH + 5 H(+)(in) = a quinol + NAD(+) + 4 H(+)(out). In terms of biological role, NDH-1 shuttles electrons from NADH, via FMN and iron-sulfur (Fe-S) centers, to quinones in the respiratory chain. The immediate electron acceptor for the enzyme in this species is believed to be ubiquinone. Couples the redox reaction to proton translocation (for every two electrons transferred, four hydrogen ions are translocated across the cytoplasmic membrane), and thus conserves the redox energy in a proton gradient. In Aquifex aeolicus (strain VF5), this protein is NADH-quinone oxidoreductase subunit I 2.